Consider the following 211-residue polypeptide: Large ribosomal subunit protein bL9 (211 aa).

A disordered region spans residues 180–211 (DDIGAAGMDDDDDDAPAPAQADPSSEESSEED).

Belongs to the bacterial ribosomal protein bL9 family.

Functionally, binds to the 23S rRNA. The chain is Large ribosomal subunit protein bL9 from Jannaschia sp. (strain CCS1).